A 467-amino-acid chain; its full sequence is Ribulose bisphosphate carboxylase large chain (467 aa).

The propeptide occupies 1 to 2 (MS). P3 bears the N-acetylproline mark. The residue at position 14 (K14) is an N6,N6,N6-trimethyllysine. N123 and T173 together coordinate substrate. K175 acts as the Proton acceptor in catalysis. K177 is a binding site for substrate. Residues K201, D203, and E204 each coordinate Mg(2+). K201 is modified (N6-carboxylysine). Catalysis depends on H294, which acts as the Proton acceptor. 3 residues coordinate substrate: R295, H327, and S379.

Belongs to the RuBisCO large chain family. Type I subfamily. Heterohexadecamer of 8 large chains and 8 small chains; disulfide-linked. The disulfide link is formed within the large subunit homodimers. Mg(2+) is required as a cofactor. The disulfide bond which can form in the large chain dimeric partners within the hexadecamer appears to be associated with oxidative stress and protein turnover.

It localises to the plastid. The protein localises to the chloroplast. It carries out the reaction 2 (2R)-3-phosphoglycerate + 2 H(+) = D-ribulose 1,5-bisphosphate + CO2 + H2O. The catalysed reaction is D-ribulose 1,5-bisphosphate + O2 = 2-phosphoglycolate + (2R)-3-phosphoglycerate + 2 H(+). RuBisCO catalyzes two reactions: the carboxylation of D-ribulose 1,5-bisphosphate, the primary event in carbon dioxide fixation, as well as the oxidative fragmentation of the pentose substrate in the photorespiration process. Both reactions occur simultaneously and in competition at the same active site. The sequence is that of Ribulose bisphosphate carboxylase large chain from Phoenix reclinata (Senegal date palm).